Consider the following 371-residue polypeptide: Gustatory and pheromone receptor 39a, isoform A (371 aa).

Topologically, residues 1-41 (MSKVCRDLRIYLRLLHIMGMMCWHFDSDHCQLVATSGSERY) are cytoplasmic. The helical transmembrane segment at 42 to 62 (AVVYAGCILVSTTAGFIFALL) threads the bilayer. Residues 63–80 (HPSRFHIAIYNQTGNFYE) lie on the Extracellular side of the membrane. Asn-73 is a glycosylation site (N-linked (GlcNAc...) asparagine). Residues 81 to 101 (AVIFRSTCVVLFLVYVILYAW) form a helical membrane-spanning segment. Residues 102-127 (RHRYRDLVQHILRLNRRCASSCTNQQ) are Cytoplasmic-facing. The chain crosses the membrane as a helical span at residues 128 to 148 (FLHNIILYGMLTILCFGNYLH). At 149 to 161 (GYTRAGLATLPLA) the chain is on the extracellular side. The helical transmembrane segment at 162–182 (LCMLVYIFAFLVLCLLLMFFV) threads the bilayer. At 183-228 (SLKQVMTAGLIHYNQQLCQGDLISGLRGRQQILKLCGGELNECFGL) the chain is on the cytoplasmic side. The helical transmembrane segment at 229 to 249 (LMLPIVALVLLMAPSGPFFLI) threads the bilayer. Topologically, residues 250–263 (STVLEGKFRPDECL) are extracellular. A helical transmembrane segment spans residues 264–284 (IMLLTSSTWDTPWMIMLVLML). At 285-340 (RTNGISEEANKTAKMLTKVPRTGTGLDRMIEKFLLKNLRQKPILTAYGFFALDKST) the chain is on the cytoplasmic side. The helical transmembrane segment at 341–361 (LFKLFTAIFTYMVILVQFKEM) threads the bilayer. At 362–371 (ENSTKSINKF) the chain is on the extracellular side. An N-linked (GlcNAc...) asparagine glycan is attached at Asn-363.

Belongs to the insect chemoreceptor superfamily. Gustatory receptor (GR) family. Gr21a subfamily. As to expression, expressed in the adult labellar chemosensory neurons, and adult thorax and wing. In larvae, is expressed in neurons of the posterior pharyngeal sense organ.

Its subcellular location is the cell membrane. Functionally, gustatory receptor which mediates acceptance or avoidance behavior, depending on its substrates. Plays a role in sustaining courtship behavior in males, possibly through the reception of a stimulating arrestant pheromone. This chain is Gustatory and pheromone receptor 39a, isoform A (Gr39a), found in Drosophila melanogaster (Fruit fly).